We begin with the raw amino-acid sequence, 157 residues long: tRNA (cytidine(34)-2'-O)-methyltransferase (157 aa).

The S-adenosyl-L-methionine site is built by L78, G100, I122, and S130.

The protein belongs to the class IV-like SAM-binding methyltransferase superfamily. RNA methyltransferase TrmH family. TrmL subfamily. As to quaternary structure, homodimer.

Its subcellular location is the cytoplasm. The enzyme catalyses cytidine(34) in tRNA + S-adenosyl-L-methionine = 2'-O-methylcytidine(34) in tRNA + S-adenosyl-L-homocysteine + H(+). It catalyses the reaction 5-carboxymethylaminomethyluridine(34) in tRNA(Leu) + S-adenosyl-L-methionine = 5-carboxymethylaminomethyl-2'-O-methyluridine(34) in tRNA(Leu) + S-adenosyl-L-homocysteine + H(+). Methylates the ribose at the nucleotide 34 wobble position in the two leucyl isoacceptors tRNA(Leu)(CmAA) and tRNA(Leu)(cmnm5UmAA). Catalyzes the methyl transfer from S-adenosyl-L-methionine to the 2'-OH of the wobble nucleotide. The chain is tRNA (cytidine(34)-2'-O)-methyltransferase from Escherichia coli O6:H1 (strain CFT073 / ATCC 700928 / UPEC).